A 69-amino-acid polypeptide reads, in one-letter code: Amphipathic peptide Hp1404 (69 aa).

A signal peptide spans 1–23; the sequence is MKTQFAILMITVVLMQMLVQTEG. At Phe-37 the chain carries Phenylalanine amide. Positions 41–69 are excised as a propeptide; that stretch reads GLKNLDQLDDSFDSDLSDADVKLLREMFK.

The protein belongs to the non-disulfide-bridged peptide (NDBP) superfamily. Short antimicrobial peptide (group 4) family. Expressed by the venom gland.

It is found in the secreted. It localises to the target cell membrane. Antibacterial activity is decreased by serum. Its function is as follows. Antimicrobial peptide that acts by inducing concentration-dependent membrane disruption, implying a membrane-lytic mode of action. Acts with potent activity against Gram-positive bacteria (MIC=4.04-16.16 uM) including methicillin-resistant S.aureus (MRSA). Its activity on Gram-negative bacteria is controversial. Li and colleagues (2014) describe no activity towards E.coli and P.aeruginosa, while Kim and colleagues (2018) describe a potent activity towards P.aeruginosa (MIC=3.13-12.5 uM), and Luo and colleagues (2021) describe a potent activity against antibiotic-sensitive and -resistant Acinetobacter baumannii strains (MIC=3.2-10 uM). On S.aureus, possibly acts by impairing an unknown intracellular target and/or by interacting with the membrane, leading to the lateral expansion of the membrane area at high MIC concentrations, resulting in the formation of mesosome-like structures that leads to cell lysis. Shows moderate inhibition of P.aeruginosa biofilm formation. Administration of this peptide at sub-MIC concentrations in multiple treatments does not lead to resistance in S.aureus. Exhibits low toxicity and hemolytic activity against mammalian cell lines and BALB/c mice. In vivo, improves the survival rate of the MRSA infected BALB/c mice in the peritonitis model. The protein is Amphipathic peptide Hp1404 of Heterometrus petersii (Asian forest scorpion).